A 261-amino-acid chain; its full sequence is Rho-related GTP-binding protein RhoU (261 aa).

The tract at residues 1 to 48 (MAPQQGRPALPARCEPPAAPPVPPRRERGGRGARGPGVSGGRGRAGGA) is disordered. Residues 7-16 (RPALPARCEP) show a composition bias toward low complexity. A compositionally biased stretch (gly residues) spans 32–48 (GARGPGVSGGRGRAGGA). GTP-binding positions include 59–66 (GDGAVGKT), 106–110 (DTAGQ), and 164–167 (TQSD). Glycyl lysine isopeptide (Lys-Gly) (interchain with G-Cter in ubiquitin) cross-links involve residues lysine 180 and lysine 251. Cysteine 259 is lipidated: S-palmitoyl cysteine.

Belongs to the small GTPase superfamily. Rho family. Interacts with PAK1. Interacts with PAK3. Interacts with ARHGAP30 in a GTP-independent manner. In its GTP-loaded conformation, interacts with ARHGAP31. Interacts with PTK2B/PYK2. Interacts with PAK4; interaction protects RHOU from ubiquitination and subsequent degradation. The cofactor is Mg(2+). Tyrosine phosphorylated by SRC in response to PTK2B/PYK2 activation. In terms of processing, ubiquitinated. 'Lys-48'-linked ubiquitination at Lys-180 and Lys-251 by the ECS(RAB40A) complex leading to its degradation.

The protein resides in the cell membrane. Its subcellular location is the golgi apparatus membrane. The protein localises to the cell junction. It localises to the focal adhesion. It is found in the cell projection. The protein resides in the podosome. Its function is as follows. Binds to and activates protein kinase PAK1. Plays a role in the regulation of cell morphology, cytoskeletal organization and focal adhesion assembly during cell migration. Also stimulates quiescent cells to reenter the cell cycle. Has no detectable GTPase activity but its high intrinsic guanine nucleotide exchange activity suggests it is constitutively GTP-bound. In Mus musculus (Mouse), this protein is Rho-related GTP-binding protein RhoU.